The sequence spans 469 residues: Asparagine--tRNA ligase (469 aa).

This sequence belongs to the class-II aminoacyl-tRNA synthetase family. As to quaternary structure, homodimer.

The protein resides in the cytoplasm. It catalyses the reaction tRNA(Asn) + L-asparagine + ATP = L-asparaginyl-tRNA(Asn) + AMP + diphosphate + H(+). This is Asparagine--tRNA ligase from Porphyromonas gingivalis (strain ATCC 33277 / DSM 20709 / CIP 103683 / JCM 12257 / NCTC 11834 / 2561).